Here is a 239-residue protein sequence, read N- to C-terminus: Tubulin beta-3 chain (239 aa).

N22 contributes to the GTP binding site. Residues E207–A239 form a disordered region. The span at X230–A239 shows a compositional bias: acidic residues.

This sequence belongs to the tubulin family. Dimer of alpha and beta chains. A typical microtubule is a hollow water-filled tube with an outer diameter of 25 nm and an inner diameter of 15 nM. Alpha-beta heterodimers associate head-to-tail to form protofilaments running lengthwise along the microtubule wall with the beta-tubulin subunit facing the microtubule plus end conferring a structural polarity. Microtubules usually have 13 protofilaments but different protofilament numbers can be found in some organisms and specialized cells. Mg(2+) is required as a cofactor.

The protein localises to the cytoplasm. Its subcellular location is the cytoskeleton. Tubulin is the major constituent of microtubules, a cylinder consisting of laterally associated linear protofilaments composed of alpha- and beta-tubulin heterodimers. Microtubules grow by the addition of GTP-tubulin dimers to the microtubule end, where a stabilizing cap forms. Below the cap, tubulin dimers are in GDP-bound state, owing to GTPase activity of alpha-tubulin. The chain is Tubulin beta-3 chain (TUBB3) from Anemia phyllitidis (Fern).